Reading from the N-terminus, the 545-residue chain is CTP synthase (545 aa).

The segment at 1–266 (MTTRYIFVTG…DELVTKRFGI (266 aa)) is amidoligase domain. Serine 14 is a CTP binding site. UTP is bound at residue serine 14. Residues 15 to 20 (SLGKGI) and aspartate 72 contribute to the ATP site. 2 residues coordinate Mg(2+): aspartate 72 and glutamate 140. Residues 147–149 (DIE), 187–192 (KTKPTQ), and lysine 223 contribute to the CTP site. UTP is bound by residues 187–192 (KTKPTQ) and lysine 223. An ATP-binding site is contributed by 239-241 (KDV). A Glutamine amidotransferase type-1 domain is found at 291 to 542 (TIGMVGKYIE…VAAAAAHQKR (252 aa)). Position 352 (glycine 352) interacts with L-glutamine. Catalysis depends on cysteine 379, which acts as the Nucleophile; for glutamine hydrolysis. L-glutamine-binding positions include 380-383 (LGMQ), glutamate 403, and arginine 470. Active-site residues include histidine 515 and glutamate 517.

Belongs to the CTP synthase family. As to quaternary structure, homotetramer.

It carries out the reaction UTP + L-glutamine + ATP + H2O = CTP + L-glutamate + ADP + phosphate + 2 H(+). The enzyme catalyses L-glutamine + H2O = L-glutamate + NH4(+). The catalysed reaction is UTP + NH4(+) + ATP = CTP + ADP + phosphate + 2 H(+). It participates in pyrimidine metabolism; CTP biosynthesis via de novo pathway; CTP from UDP: step 2/2. Its activity is regulated as follows. Allosterically activated by GTP, when glutamine is the substrate; GTP has no effect on the reaction when ammonia is the substrate. The allosteric effector GTP functions by stabilizing the protein conformation that binds the tetrahedral intermediate(s) formed during glutamine hydrolysis. Inhibited by the product CTP, via allosteric rather than competitive inhibition. Catalyzes the ATP-dependent amination of UTP to CTP with either L-glutamine or ammonia as the source of nitrogen. Regulates intracellular CTP levels through interactions with the four ribonucleotide triphosphates. The sequence is that of CTP synthase from Shewanella woodyi (strain ATCC 51908 / MS32).